We begin with the raw amino-acid sequence, 365 residues long: MTDSQQSKPKHVMMMAAGTGGHVFPALAVAKQLQQQGCQVSWLATPTGMENRLLKDQNIPIYQIDIQGVRGNGVIRKLAAPFKILKATFSAMRYMKQLKVDAVAGFGGYVAGPGGLAARLLGIPVLIHEQNAVAGFTNAQLSRVAKVVCEAFPNTFPASEKVVTTGNPVRREITDILSPKWRYDEREQAGKLLNILIVGGSLGAKALNERLPPALKQLEVPLNIFHQCGQQQVEATQALYADAPANLTVQVLPFIEDMAKAYSEADLIICRAGALTVTEVATAGVAAVFVPLPIAVDDHQTANAKFLADVGAAKICQQSTMTPEVLNQLFTTLMNRQLLTEMAVKARQHAQPNATQHVVDLIQKM.

UDP-N-acetyl-alpha-D-glucosamine-binding positions include 19 to 21, Asn131, Arg170, Ser201, Ile255, 274 to 279, and Gln300; these read TGG and ALTVTE.

This sequence belongs to the glycosyltransferase 28 family. MurG subfamily.

It localises to the cell inner membrane. The enzyme catalyses di-trans,octa-cis-undecaprenyl diphospho-N-acetyl-alpha-D-muramoyl-L-alanyl-D-glutamyl-meso-2,6-diaminopimeloyl-D-alanyl-D-alanine + UDP-N-acetyl-alpha-D-glucosamine = di-trans,octa-cis-undecaprenyl diphospho-[N-acetyl-alpha-D-glucosaminyl-(1-&gt;4)]-N-acetyl-alpha-D-muramoyl-L-alanyl-D-glutamyl-meso-2,6-diaminopimeloyl-D-alanyl-D-alanine + UDP + H(+). The protein operates within cell wall biogenesis; peptidoglycan biosynthesis. Functionally, cell wall formation. Catalyzes the transfer of a GlcNAc subunit on undecaprenyl-pyrophosphoryl-MurNAc-pentapeptide (lipid intermediate I) to form undecaprenyl-pyrophosphoryl-MurNAc-(pentapeptide)GlcNAc (lipid intermediate II). This is UDP-N-acetylglucosamine--N-acetylmuramyl-(pentapeptide) pyrophosphoryl-undecaprenol N-acetylglucosamine transferase from Acinetobacter baumannii (strain ACICU).